The following is a 239-amino-acid chain: DNA repair protein RecO (239 aa).

The protein belongs to the RecO family.

In terms of biological role, involved in DNA repair and RecF pathway recombination. The protein is DNA repair protein RecO of Christiangramia forsetii (strain DSM 17595 / CGMCC 1.15422 / KT0803) (Gramella forsetii).